We begin with the raw amino-acid sequence, 25 residues long: Bacteriocin mutacin F-59.1 (25 aa).

Cysteine 9 and residue 14 are oxidised to a cystine.

It localises to the secreted. Its function is as follows. Bactericidal activity against a wide range of pathogenic bacteria, including Bacillus spp., Enterococcus spp., Listeria spp., Staphylococcus spp. and Streptococcus spp. Has no activity against Lactobacillus salivarius, Staphylococcus aureus, Streptococcus pyogenes and Streptococcus suis. The protein is Bacteriocin mutacin F-59.1 of Streptococcus mutans.